Here is a 43-residue protein sequence, read N- to C-terminus: MSDFVNAISEAVKAGLSADWVTMGTSIADALAKGADFILGFFN.

Met-1 carries the N-formylmethionine modification.

This sequence belongs to the staphylococcal hemolytic protein family.

It is found in the secreted. Its function is as follows. Virulence factor. Causes hemolysis of erythrocytes from sheep (HD(50)=2.63 mM), rabbit (HD(50)=2.37 mM), guinea pig (HD(50)=1.98 mM), dog (HD(50)=1.02 mM) and human (HD(50)=2.07 mM). Acts synergistically with beta-hemolysins from S.aureus ATCC 25923. Cytotoxic towards human dermal fibroblasts. This chain is Hemolysin H3C, found in Staphylococcus cohnii subsp. cohnii.